A 182-amino-acid chain; its full sequence is UPF0301 protein NGK_1355 (182 aa).

The protein belongs to the UPF0301 (AlgH) family.

This Neisseria gonorrhoeae (strain NCCP11945) protein is UPF0301 protein NGK_1355.